The primary structure comprises 204 residues: Proteasome subunit beta (204 aa).

The propeptide at 1–8 (MDDKILEG) is removed in mature form; by autocatalysis. Threonine 9 functions as the Nucleophile in the catalytic mechanism.

The protein belongs to the peptidase T1B family. As to quaternary structure, the 20S proteasome core is composed of 14 alpha and 14 beta subunits that assemble into four stacked heptameric rings, resulting in a barrel-shaped structure. The two inner rings, each composed of seven catalytic beta subunits, are sandwiched by two outer rings, each composed of seven alpha subunits. The catalytic chamber with the active sites is on the inside of the barrel. Has a gated structure, the ends of the cylinder being occluded by the N-termini of the alpha-subunits. Is capped at one or both ends by the proteasome regulatory ATPase, PAN.

Its subcellular location is the cytoplasm. It carries out the reaction Cleavage of peptide bonds with very broad specificity.. Its activity is regulated as follows. The formation of the proteasomal ATPase PAN-20S proteasome complex, via the docking of the C-termini of PAN into the intersubunit pockets in the alpha-rings, triggers opening of the gate for substrate entry. Interconversion between the open-gate and close-gate conformations leads to a dynamic regulation of the 20S proteasome proteolysis activity. In terms of biological role, component of the proteasome core, a large protease complex with broad specificity involved in protein degradation. The sequence is that of Proteasome subunit beta from Methanobrevibacter smithii (strain ATCC 35061 / DSM 861 / OCM 144 / PS).